The following is a 678-amino-acid chain: Vitrin (678 aa).

Residues Met1–Ser26 form the signal peptide. In terms of domain architecture, LCCL spans Thr40–Phe133. Cystine bridges form between Cys46/Cys62 and Cys66/Cys86. A compositionally biased stretch (polar residues) spans Ser154 to Ala168. 2 disordered regions span residues Ser154–Thr177 and Thr199–Phe257. The span at Thr199–Pro216 shows a compositional bias: low complexity. Over residues Ser230–Arg240 the composition is skewed to polar residues. VWFA domains are found at residues Asp293–Val478 and Asp495–Ile668. N-linked (GlcNAc...) asparagine glycosylation is found at Asn390 and Asn520.

Binds dermatan sulfate and chondroitin sulfate.

It is found in the secreted. Its subcellular location is the extracellular space. It localises to the extracellular matrix. In terms of biological role, promotes matrix assembly and cell adhesiveness. Plays a role in spinal cord formation by regulating the proliferation and differentiation of neural stem cells. The chain is Vitrin (VIT) from Homo sapiens (Human).